A 394-amino-acid chain; its full sequence is Tubulin-like protein CetZ4 (394 aa).

GTP contacts are provided by residues 10-14 (QAGGK), 110-112 (GTG), Glu142, Asn169, and Asn187.

It belongs to the CetZ family.

The protein resides in the cytoplasm. Its function is as follows. Involved in cell shape control. The chain is Tubulin-like protein CetZ4 from Haloferax volcanii (strain ATCC 29605 / DSM 3757 / JCM 8879 / NBRC 14742 / NCIMB 2012 / VKM B-1768 / DS2) (Halobacterium volcanii).